A 113-amino-acid polypeptide reads, in one-letter code: Eukaryotic translation initiation factor 1 (113 aa).

Serine 2 bears the N-acetylserine mark. 2 positions are modified to phosphoserine: serine 2 and serine 9.

This sequence belongs to the SUI1 family. As to quaternary structure, component of the 43S pre-initiation complex (43S PIC), which is composed of the 40S ribosomal subunit, EIF1, eIF1A (EIF1AX), eIF3 complex, EIF5 and eIF2-GTP-initiator tRNA complex (eIF2 ternary complex). Interacts with EIF4G1; in specific 5'-UTR length and AUG context. Interacts with EIF5; which in a mutual exclusive interaction associates either with EIF1 or with EIF2S2 on a common binding site. Interacts with RENT2.

The protein localises to the cytoplasm. Functionally, component of the 43S pre-initiation complex (43S PIC), which binds to the mRNA cap-proximal region, scans mRNA 5'-untranslated region, and locates the initiation codon. Together with eIF1A (EIF1AX), EIF1 facilitates scanning and is essential for start codon recognition on the basis of AUG nucleotide context and location relative to the 5'-cap. Participates to initiation codon selection by influencing the conformation of the 40S ribosomal subunit and the positions of bound mRNA and initiator tRNA; this is possible after its binding to the interface surface of the platform of the 40S ribosomal subunit close to the P-site. Together with eIF1A (EIF1AX), also regulates the opening and closing of the mRNA binding channel, which ensures mRNA recruitment, scanning and the fidelity of initiation codon selection. Continuously monitors and protects against premature and partial base-pairing of codons in the 5'-UTR with the anticodon of initiator tRNA. Together with eIF1A (EIF1AX), acts for ribosomal scanning, promotion of the assembly of 48S complex at the initiation codon (43S PIC becomes 48S PIC after the start codon is reached), and dissociation of aberrant complexes. Interacts with EIF4G1, which in a mutual exclusive interaction associates either with EIF1 or with EIF4E on a common binding site. EIF4G1-EIF1 complex promotes ribosome scanning (on both short and long 5'UTR), leaky scanning (on short 5'UTR) which is the bypass of the initial start codon, and discrimination against cap-proximal AUG. Is probably maintained within the 43S PIC in open conformation thanks to eIF1A-EIF5 interaction. Once the correct start codon is reached, EIF1 is physically excluded from the decoding site, shifting the PIC into the closed conformation and arresting it at the start codon. The chain is Eukaryotic translation initiation factor 1 (Eif1) from Mus musculus (Mouse).